Consider the following 180-residue polypeptide: Ribulose bisphosphate carboxylase small subunit, chloroplastic 2 (180 aa).

The N-terminal 56 residues, 1–56 (MASMISSSAVTTVSRASRGQSAAVAPFGGLKSMTGFPVKKVNTDITSITSNGGRVK), are a transit peptide targeting the chloroplast.

It belongs to the RuBisCO small chain family. In terms of assembly, heterohexadecamer of 8 large and 8 small subunits.

It localises to the plastid. Its subcellular location is the chloroplast. In terms of biological role, ruBisCO catalyzes two reactions: the carboxylation of D-ribulose 1,5-bisphosphate, the primary event in carbon dioxide fixation, as well as the oxidative fragmentation of the pentose substrate. Both reactions occur simultaneously and in competition at the same active site. Although the small subunit is not catalytic it is essential for maximal activity. In Pisum sativum (Garden pea), this protein is Ribulose bisphosphate carboxylase small subunit, chloroplastic 2.